The chain runs to 165 residues: Glutamyl-tRNA(Gln) amidotransferase subunit F, mitochondrial (165 aa).

Residues 1–19 (MKSILRSTTRNLITSSRRF) constitute a mitochondrion transit peptide.

The protein belongs to the GatF family. As to quaternary structure, subunit of the heterotrimeric GatFAB amidotransferase (AdT) complex, composed of A, B and F subunits.

The protein localises to the mitochondrion inner membrane. It catalyses the reaction L-glutamyl-tRNA(Gln) + L-glutamine + ATP + H2O = L-glutaminyl-tRNA(Gln) + L-glutamate + ADP + phosphate + H(+). Its function is as follows. Allows the formation of correctly charged Gln-tRNA(Gln) through the transamidation of misacylated Glu-tRNA(Gln) in the mitochondria. The reaction takes place in the presence of glutamine and ATP through an activated gamma-phospho-Glu-tRNA(Gln). Required for proper protein synthesis within the mitochondrion. The protein is Glutamyl-tRNA(Gln) amidotransferase subunit F, mitochondrial of Candida albicans (strain WO-1) (Yeast).